Here is a 144-residue protein sequence, read N- to C-terminus: Maximins 7/H1 (144 aa).

An N-terminal signal peptide occupies residues 1–18; sequence MNFKYIVAVSFLIASAYA. A propeptide spanning residues 19 to 43 is cleaved from the precursor; it reads RSEENDEQSLSQRDVLEEESLREIR. Position 70 is an asparagine amide (N70). A propeptide spanning residues 74 to 123 is cleaved from the precursor; the sequence is TAEDHEVMKRLEAVMRDLDSLDYPEEAAERETRGFNQEEIANLFTKKEKR. L143 bears the Leucine amide mark.

Belongs to the bombinin family. Expressed by the skin glands.

Its subcellular location is the secreted. Maximin-7 shows antimicrobial activity against bacteria and against the fungus C.albicans. It has little hemolytic activity. Its function is as follows. Maximin-H1 shows antibacterial activity against both Gram-positive and Gram-negative bacteria. It also shows antimicrobial activity against the fungus C.albicans. Shows strong hemolytic activity. In Bombina maxima (Giant fire-bellied toad), this protein is Maximins 7/H1.